Here is a 398-residue protein sequence, read N- to C-terminus: Palmitoyl-[acyl-carrier-protein] 4-desaturase 3, chloroplastic (398 aa).

A chloroplast-targeting transit peptide spans 1–29; sequence MALRSLFLPNAFPNASSFRGGSRRGAAPR. Residues Glu-139, Glu-177, His-180, Glu-230, Glu-263, and His-266 each coordinate Fe cation.

The protein belongs to the fatty acid desaturase type 2 family. Homodimer. Fe(2+) is required as a cofactor. As to expression, preferentially expressed in the flower labellum. Low expression in leaves.

The protein localises to the plastid. It is found in the chloroplast stroma. It carries out the reaction hexadecanoyl-[ACP] + 2 reduced [2Fe-2S]-[ferredoxin] + O2 + 2 H(+) = (4Z)-hexadecenoyl-[ACP] + 2 oxidized [2Fe-2S]-[ferredoxin] + 2 H2O. It participates in lipid metabolism; fatty acid metabolism. Its function is as follows. Converts palmitoyl-ACP to (4Z)-hexadec-4-enoyl-ACP by introduction of a cis double bond between carbons 4 and 5 of the acyl chain. This chain is Palmitoyl-[acyl-carrier-protein] 4-desaturase 3, chloroplastic (SAD3), found in Ophrys arachnitiformis subsp. archipelagi (Orchid).